The sequence spans 92 residues: Small ribosomal subunit protein uS19 (92 aa).

The protein belongs to the universal ribosomal protein uS19 family.

In terms of biological role, protein S19 forms a complex with S13 that binds strongly to the 16S ribosomal RNA. The protein is Small ribosomal subunit protein uS19 of Nostoc sp. (strain PCC 7120 / SAG 25.82 / UTEX 2576).